The following is a 238-amino-acid chain: Protein CPn_0658/CP_0089/CPj0658/CpB0684 (238 aa).

This sequence belongs to the chlamydial CPn_0658/CT_538/TC_0825 family.

This is Protein CPn_0658/CP_0089/CPj0658/CpB0684 from Chlamydia pneumoniae (Chlamydophila pneumoniae).